The primary structure comprises 127 residues: uncharacterized protein (127 aa).

Helical transmembrane passes span 13–35 (ILLL…GIIF) and 57–81 (AVLI…IMIW).

It is found in the cell membrane. This is an uncharacterized protein from Mycoplasma genitalium (strain ATCC 33530 / DSM 19775 / NCTC 10195 / G37) (Mycoplasmoides genitalium).